The chain runs to 183 residues: Transmembrane and coiled-coil domain-containing protein 2 (183 aa).

A helical transmembrane segment spans residues 54–74 (VQIILGISFLTLLAIGLFALW). Residues 127-150 (GLQEKILKKLQMVENKVRDLEGII) adopt a coiled-coil conformation.

It localises to the membrane. In Mus musculus (Mouse), this protein is Transmembrane and coiled-coil domain-containing protein 2 (Tmco2).